The chain runs to 178 residues: Actin-related protein 2/3 complex subunit 3 (178 aa).

A Glycyl lysine isopeptide (Lys-Gly) (interchain with G-Cter in ubiquitin) cross-link involves residue Lys-29.

This sequence belongs to the ARPC3 family. As to quaternary structure, component of the Arp2/3 complex composed of ARP2, ARP3, ARC40/p41-ARC, ARC35/p34-ARC, ARC18/p21-ARC, ARC19/p20-ARC and ARC16/p16-ARC.

It localises to the cytoplasm. The protein resides in the cytoskeleton. In terms of biological role, functions as a component of the Arp2/3 complex which is involved in regulation of actin polymerization and together with an activating nucleation-promoting factor (NPF) mediates the formation of branched actin networks. The polypeptide is Actin-related protein 2/3 complex subunit 3 (ARC18) (Saccharomyces cerevisiae (strain ATCC 204508 / S288c) (Baker's yeast)).